Reading from the N-terminus, the 61-residue chain is Three-finger hemachatoxin (61 aa).

Cystine bridges form between Cys-3-Cys-22, Cys-15-Cys-39, Cys-43-Cys-54, and Cys-55-Cys-60.

The protein belongs to the three-finger toxin family. Short-chain subfamily. Type IB cytotoxin sub-subfamily. As to expression, expressed by the venom gland.

It localises to the secreted. Its function is as follows. This protein lyses red blood cells and has cardiotoxic and hypotensive activities. The sequence is that of Three-finger hemachatoxin from Hemachatus haemachatus (Rinkhals).